The primary structure comprises 199 residues: Recombination protein RecR (199 aa).

The C4-type zinc-finger motif lies at 58 to 73 (CKKCFNLTSEDECEIC). The region spanning 81 to 175 (KLICVVSETK…KVTRIAYGLP (95 aa)) is the Toprim domain.

It belongs to the RecR family.

May play a role in DNA repair. It seems to be involved in an RecBC-independent recombinational process of DNA repair. It may act with RecF and RecO. The chain is Recombination protein RecR from Prochlorococcus marinus (strain AS9601).